Here is an 870-residue protein sequence, read N- to C-terminus: NEDD4-like E3 ubiquitin-protein ligase WWP2 (870 aa).

In terms of domain architecture, C2 spans 1 to 117 (MASASSSRAG…KNNGGKMENT (117 aa)). Positions 150–300 (SVPNGSAVTD…QLPAAAQAPD (151 aa)) are disordered. A compositionally biased stretch (polar residues) spans 152 to 171 (PNGSAVTDGSQPPSRESSGT). A compositionally biased stretch (low complexity) spans 198–208 (GGSARTATAAS). Residue S211 is modified to Phosphoserine. Composition is skewed to polar residues over residues 222 to 235 (VKNSSSSGLANGTV) and 262 to 289 (SVSSNPNTTSLPAQSTPAEGEEASTSGT). Low complexity predominate over residues 290–300 (QQLPAAAQAPD). WW domains lie at 300–333 (DALPAGWEQRELPNGRVYYVDHNTKTTTWERPLP), 330–363 (RPLPPGWEKRTDPRGRFYYVDHNTRTTTWQRPTA), 405–437 (GPLPPGWEKRQDNGRVYYVNHNTRTTQWEDPRT), and 444–477 (PALPPGWEMKYTSEGVRYFVDHNTRTTTFKDPRP). An HECT domain is found at 536–870 (KPYDLRRRLY…IEETEGFGQE (335 aa)). C838 acts as the Glycyl thioester intermediate in catalysis.

Interacts with SCNN1A, SCNN1B, SCNN1G, WBP1, WBP2 and ATN1. Interacts with ERBB4, NDFIP1 and NDFIP2. Interacts with ARRDC4. Interacts with POU5F1, RBP1, EGR2 and SLC11A2. Interacts (via WW domains) with ARRDC1 (via PPxY motifs); ubiquitinates ARRDC1. Interacts (via WW domains) with ARRDC2 and ARRDC3. Post-translationally, autoubiquitinated. Ubiquitinated by the SCF(FBXL15) complex, leading to its degradation by the proteasome.

It localises to the nucleus. It carries out the reaction S-ubiquitinyl-[E2 ubiquitin-conjugating enzyme]-L-cysteine + [acceptor protein]-L-lysine = [E2 ubiquitin-conjugating enzyme]-L-cysteine + N(6)-ubiquitinyl-[acceptor protein]-L-lysine.. It functions in the pathway protein modification; protein ubiquitination. Activated by NDFIP1- and NDFIP2-binding. Its function is as follows. E3 ubiquitin-protein ligase which accepts ubiquitin from an E2 ubiquitin-conjugating enzyme in the form of a thioester and then directly transfers the ubiquitin to targeted substrates. Polyubiquitinates POU5F1 by 'Lys-63'-linked conjugation and promotes it to proteasomal degradation; regulates POU5F1 protein level during differentiation of embryonal carcinoma cells (ECCs) but not in undifferentiated ECCs and embryonic stem cells (ESCs). Ubiquitinates EGR2 and promotes it to proteasomal degradation; in T-cells the ubiquitination inhibits activation-induced cell death. Ubiquitinates SLC11A2; the ubiquitination is enhanced by presence of NDFIP1 and NDFIP2. Ubiquitinates RPB1 and promotes it to proteasomal degradation. The chain is NEDD4-like E3 ubiquitin-protein ligase WWP2 (Wwp2) from Mus musculus (Mouse).